Here is a 218-residue protein sequence, read N- to C-terminus: uncharacterized protein (218 aa).

Positions 4–207 (WKVAAAQYEP…SLLLVGQRSS (204 aa)) constitute a CN hydrolase domain.

This is an uncharacterized protein from Escherichia coli (strain K12).